The primary structure comprises 739 residues: Sulfate transporter (739 aa).

2 stretches are compositionally biased toward basic and acidic residues: residues 1–17 (MSSENKEQHDLSPRDLP) and 31–46 (TQRRSGTDLRQSETGH). Residues 1–47 (MSSENKEQHDLSPRDLPEEAFGFPSELPLETQRRSGTDLRQSETGHG) form a disordered region. A Phosphoserine modification is found at serine 12. Transmembrane regions (helical) follow at residues 112 to 132 (VMSGLIVGILLVPQSIAYSLL) and 137 to 157 (PIYGLYTSFFASIIYFLFGTS). N-linked (GlcNAc...) asparagine glycosylation occurs at asparagine 205. 2 helical membrane passes run 227–247 (FMAGVYQVAMGFFQVGFVSVY) and 255–275 (GFVTGASFTILTSQAKYLLGL). N-linked (GlcNAc...) asparagine glycosylation occurs at asparagine 357. 4 helical membrane passes run 378–398 (LIPNVAVDAIAISIIGFAITV), 420–440 (AIGFCNIIPSFFHCITTSAAL), 455–475 (LSAIVTALVLLLVLLVIAPLF), and 524–544 (LLSTEIGLLVGVCFSMFCVIL). Residues 568–719 (TYKNLRSKSG…YSLSEAVAFA (152 aa)) form the STAS domain.

The protein belongs to the SLC26A/SulP transporter (TC 2.A.53) family. In terms of processing, N-glycosylated. In terms of tissue distribution, distributed mainly in the thymus, testis and osteoblastic cells. Highly expressed in the bone, cartilage, kidney and colon.

The protein resides in the cell membrane. Its subcellular location is the apical cell membrane. The catalysed reaction is oxalate(in) + sulfate(out) = oxalate(out) + sulfate(in). The enzyme catalyses sulfate(out) + 2 chloride(in) = sulfate(in) + 2 chloride(out). It carries out the reaction oxalate(out) + 2 chloride(in) = oxalate(in) + 2 chloride(out). It catalyses the reaction bromide(in) + chloride(out) = bromide(out) + chloride(in). The catalysed reaction is nitrate(in) + chloride(out) = nitrate(out) + chloride(in). The enzyme catalyses iodide(in) + chloride(out) = iodide(out) + chloride(in). Its function is as follows. Sulfate transporter which mediates sulfate uptake into chondrocytes in order to maintain adequate sulfation of proteoglycans which is needed for cartilage development. Mediates electroneutral anion exchange of sulfate ions for oxalate ions, sulfate and oxalate ions for chloride and/or hydroxyl ions and chloride ions for bromide, iodide and nitrate ions. The coupling of sulfate transport to both hydroxyl and chloride ions likely serves to ensure transport at both acidic pH when most sulfate uptake is mediated by sulfate-hydroxide exchange and alkaline pH when most sulfate uptake is mediated by sulfate-chloride exchange. Essential for chondrocyte proliferation, differentiation and cell size expansion. In Mus musculus (Mouse), this protein is Sulfate transporter (Slc26a2).